The sequence spans 339 residues: MSTVNASMTVIGAGSYGTALAITLARNGHEVVLWGHDPKHIATLQHDRCNVAFLPDVPFPDSLHLESDLATALAASRNILVVVPSHVFGQVLHQIKPLMRADARIVWATKGLEAETGRLLQDVAREVLGDDIPLAVISGPTFAKELAAGLPTAISLASTDQTFSDDLQHLLHCGKSFRVYSNPDFIGVQLGGAVKNVIAIGAGMSDGIGFGANARTALITRGLTEMSRLGEALGADPATFMGMAGLGDLVLTCTDNQSRNRRFGMMLGQGMDVMGAQEKIGQVVEGYRNTKEVRELAHRFGVEMPITEEIYQVLYCGKNAREAALTLLGRSRKEERSSS.

4 residues coordinate NADPH: S15, Y16, H36, and K110. Residues K110, G139, and T141 each coordinate sn-glycerol 3-phosphate. An NADPH-binding site is contributed by A143. Residues K195, D248, S258, R259, and N260 each coordinate sn-glycerol 3-phosphate. Catalysis depends on K195, which acts as the Proton acceptor. R259 is a binding site for NADPH. V283 and E285 together coordinate NADPH.

Belongs to the NAD-dependent glycerol-3-phosphate dehydrogenase family.

It localises to the cytoplasm. It carries out the reaction sn-glycerol 3-phosphate + NAD(+) = dihydroxyacetone phosphate + NADH + H(+). The catalysed reaction is sn-glycerol 3-phosphate + NADP(+) = dihydroxyacetone phosphate + NADPH + H(+). The protein operates within membrane lipid metabolism; glycerophospholipid metabolism. Functionally, catalyzes the reduction of the glycolytic intermediate dihydroxyacetone phosphate (DHAP) to sn-glycerol 3-phosphate (G3P), the key precursor for phospholipid synthesis. The sequence is that of Glycerol-3-phosphate dehydrogenase [NAD(P)+] from Enterobacter sp. (strain 638).